Reading from the N-terminus, the 214-residue chain is ATP phosphoribosyltransferase (214 aa).

The protein belongs to the ATP phosphoribosyltransferase family. Short subfamily. In terms of assembly, heteromultimer composed of HisG and HisZ subunits.

It is found in the cytoplasm. The enzyme catalyses 1-(5-phospho-beta-D-ribosyl)-ATP + diphosphate = 5-phospho-alpha-D-ribose 1-diphosphate + ATP. Its pathway is amino-acid biosynthesis; L-histidine biosynthesis; L-histidine from 5-phospho-alpha-D-ribose 1-diphosphate: step 1/9. Catalyzes the condensation of ATP and 5-phosphoribose 1-diphosphate to form N'-(5'-phosphoribosyl)-ATP (PR-ATP). Has a crucial role in the pathway because the rate of histidine biosynthesis seems to be controlled primarily by regulation of HisG enzymatic activity. This Aquifex aeolicus (strain VF5) protein is ATP phosphoribosyltransferase (hisG).